The following is a 160-amino-acid chain: S-ribosylhomocysteine lyase (160 aa).

Fe cation-binding residues include His-57, His-61, and Cys-127.

It belongs to the LuxS family. In terms of assembly, homodimer. Fe cation is required as a cofactor.

The enzyme catalyses S-(5-deoxy-D-ribos-5-yl)-L-homocysteine = (S)-4,5-dihydroxypentane-2,3-dione + L-homocysteine. Functionally, involved in the synthesis of autoinducer 2 (AI-2) which is secreted by bacteria and is used to communicate both the cell density and the metabolic potential of the environment. The regulation of gene expression in response to changes in cell density is called quorum sensing. Catalyzes the transformation of S-ribosylhomocysteine (RHC) to homocysteine (HC) and 4,5-dihydroxy-2,3-pentadione (DPD). This chain is S-ribosylhomocysteine lyase, found in Streptococcus pneumoniae (strain CGSP14).